A 206-amino-acid chain; its full sequence is Ectodysplasin-A receptor-associated adapter protein (206 aa).

Disordered stretches follow at residues 1–36 (MRPL…DKYP) and 52–77 (TLNC…TGDP). Composition is skewed to polar residues over residues 24 to 33 (PSTLSFNTSD) and 52 to 62 (TLNCPPNSDMK). The Death domain occupies 114–190 (DVIRIKLDPC…DVEKVLRRWV (77 aa)).

As to quaternary structure, self-associates and binds to EDAR, TRAF1, TRAF2 and TRAF3.

The protein localises to the cytoplasm. Adapter protein that interacts with EDAR DEATH domain and couples the receptor to EDA signaling pathway during morphogenesis of ectodermal organs. Mediates the activation of NF-kappa-B. This Macaca fascicularis (Crab-eating macaque) protein is Ectodysplasin-A receptor-associated adapter protein (EDARADD).